Reading from the N-terminus, the 305-residue chain is MLKQRTIKQIVKTVGIGLHSGRKVELTLRPAGPDTGIVFSRVDLATPVDIPASAMAIGDTRLASVLQKDGARVSTIEHLMSACAGLGIDNLYVDVTAEEIPIMDGSAGSFVFLIQSAGIEEQNAAKKFIKVTKPVEIRDGDKFARLDPYFGFKLKFTIDFRHPAVDKTGQALEVDFANTSYVREIARARTFGFAHEVEMMRELGLARGGSMDNAIVLDEYRILNNDGLRYDDEFVKHKMLDAIGDLYVVGHPLLASYTAYKSGHGLNNALLRELLAHEDSYEIVTFDDTQKAPRGFAYETQTAFA.

Histidine 78, histidine 237, and aspartate 241 together coordinate Zn(2+). Histidine 264 serves as the catalytic Proton donor.

The protein belongs to the LpxC family. It depends on Zn(2+) as a cofactor.

It carries out the reaction a UDP-3-O-[(3R)-3-hydroxyacyl]-N-acetyl-alpha-D-glucosamine + H2O = a UDP-3-O-[(3R)-3-hydroxyacyl]-alpha-D-glucosamine + acetate. The protein operates within glycolipid biosynthesis; lipid IV(A) biosynthesis; lipid IV(A) from (3R)-3-hydroxytetradecanoyl-[acyl-carrier-protein] and UDP-N-acetyl-alpha-D-glucosamine: step 2/6. Its function is as follows. Catalyzes the hydrolysis of UDP-3-O-myristoyl-N-acetylglucosamine to form UDP-3-O-myristoylglucosamine and acetate, the committed step in lipid A biosynthesis. This is UDP-3-O-acyl-N-acetylglucosamine deacetylase from Paraburkholderia xenovorans (strain LB400).